The following is a 346-amino-acid chain: Dimethyladenosine transferase 1, mitochondrial (346 aa).

A mitochondrion-targeting transit peptide spans 1-27 (MAASGKLSTCRLPPLPTIREIIKLLRL). S-adenosyl-L-methionine is bound by residues Leu-38, Gly-63, Glu-85, Lys-86, Asp-111, Val-112, and Asn-141.

The protein belongs to the class I-like SAM-binding methyltransferase superfamily. rRNA adenine N(6)-methyltransferase family. KsgA subfamily. As to quaternary structure, interacts with mitochondrial RNA polymerase POLRMT. Interacts with TFAM. Bound to the maturing mtSSU until the late stages of assembly. As to expression, ubiquitously expressed.

The protein resides in the mitochondrion. The catalysed reaction is adenosine(N)/adenosine(N+1) in rRNA + 4 S-adenosyl-L-methionine = N(6)-dimethyladenosine(N)/N(6)-dimethyladenosine(N+1) in rRNA + 4 S-adenosyl-L-homocysteine + 4 H(+). Its function is as follows. Mitochondrial methyltransferase which uses S-adenosyl methionine to dimethylate two highly conserved adjacent adenosine residues (A1583 and A1584) within the loop of helix 45 at the 3-prime end of 12S rRNA, thereby regulating the assembly or stability of the small subunit of the mitochondrial ribosome. Also required for basal transcription of mitochondrial DNA, probably via its interaction with POLRMT and TFAM. Stimulates transcription independently of the methyltransferase activity. This chain is Dimethyladenosine transferase 1, mitochondrial, found in Homo sapiens (Human).